The sequence spans 73 residues: RNA-binding protein Hfq (73 aa).

The Sm domain maps to 8-68 (DQFLNQIRKE…ISTFAPQKNV (61 aa)).

It belongs to the Hfq family. As to quaternary structure, homohexamer.

Its function is as follows. RNA chaperone that binds small regulatory RNA (sRNAs) and mRNAs to facilitate mRNA translational regulation in response to envelope stress, environmental stress and changes in metabolite concentrations. Also binds with high specificity to tRNAs. This Bacillus licheniformis (strain ATCC 14580 / DSM 13 / JCM 2505 / CCUG 7422 / NBRC 12200 / NCIMB 9375 / NCTC 10341 / NRRL NRS-1264 / Gibson 46) protein is RNA-binding protein Hfq.